A 609-amino-acid polypeptide reads, in one-letter code: Glutamine--fructose-6-phosphate aminotransferase [isomerizing] (609 aa).

The active-site Nucleophile; for GATase activity is the C2. The Glutamine amidotransferase type-2 domain occupies 2–217 (CGIVGAIAGR…DGDTAEIRRD (216 aa)). SIS domains lie at 285–425 (AESV…LRGA) and 458–599 (WAEC…VDKP). Residue K604 is the For Fru-6P isomerization activity of the active site.

As to quaternary structure, homodimer.

It is found in the cytoplasm. It catalyses the reaction D-fructose 6-phosphate + L-glutamine = D-glucosamine 6-phosphate + L-glutamate. Catalyzes the first step in hexosamine metabolism, converting fructose-6P into glucosamine-6P using glutamine as a nitrogen source. The polypeptide is Glutamine--fructose-6-phosphate aminotransferase [isomerizing] (Xylella fastidiosa (strain 9a5c)).